A 290-amino-acid chain; its full sequence is Transmembrane protein 33 homolog (290 aa).

Disordered stretches follow at residues 1–22 (MSSP…EFTG) and 39–72 (IDPN…SPRA). Residues 45–72 (SSNNTTTQRPSTSSSSRTSSSSTSSPRA) show a composition bias toward low complexity. Helical transmembrane passes span 83–103 (LYGA…FYFI), 109–129 (FFYK…FNTF), 150–170 (FVFY…YLLP), and 218–238 (IVLI…LVFI).

Belongs to the PER33/POM33 family.

The protein localises to the membrane. The chain is Transmembrane protein 33 homolog (tmem33) from Dictyostelium discoideum (Social amoeba).